The chain runs to 731 residues: Wall-associated receptor kinase-like 5 (731 aa).

The N-terminal stretch at 1 to 26 is a signal peptide; that stretch reads MKTKTYRFVCLVASVLTLQLMNGSSA. The Extracellular segment spans residues 27–360; it reads ATPPPPPNSK…PAKPLVLQGV (334 aa). Residues asparagine 37, asparagine 43, asparagine 73, asparagine 96, asparagine 124, asparagine 137, asparagine 236, and asparagine 272 are each glycosylated (N-linked (GlcNAc...) asparagine). An atypical EGF-like region spans residues 285–342; it reads CLCEYGYFSEMSYRNCYCSLGFTGNPYLRGGCIDNDDCKGPNICEEGTCVNVPGGYRC. 3 cysteine pairs are disulfide-bonded: cysteine 287–cysteine 300, cysteine 322–cysteine 333, and cysteine 328–cysteine 342. Residues 361 to 381 form a helical membrane-spanning segment; it reads LLGLMGLLFLVVGTLGLIIFI. Residues 382 to 731 are Cytoplasmic-facing; that stretch reads KKRRRIISSR…EDQVMEISRE (350 aa). Residues 432 to 705 form the Protein kinase domain; the sequence is FSVKRVLGKG…REASLELERI (274 aa). Residues 438–446 and lysine 460 each bind ATP; that span reads LGKGSQGTV. Tyrosine 505 carries the phosphotyrosine modification. Catalysis depends on aspartate 557, which acts as the Proton acceptor. Threonine 591 and threonine 596 each carry phosphothreonine. Phosphotyrosine is present on tyrosine 604. Positions 709–731 are disordered; the sequence is PEDLEAHIENDDEEDQVMEISRE.

It belongs to the protein kinase superfamily. Ser/Thr protein kinase family. As to expression, preferentially expressed in roots and flowers.

It localises to the membrane. It catalyses the reaction L-seryl-[protein] + ATP = O-phospho-L-seryl-[protein] + ADP + H(+). The catalysed reaction is L-threonyl-[protein] + ATP = O-phospho-L-threonyl-[protein] + ADP + H(+). Serine/threonine-protein kinase that may function as a signaling receptor of extracellular matrix component. May be involved in plant's response to pathogen infection. The protein is Wall-associated receptor kinase-like 5 (WAKL5) of Arabidopsis thaliana (Mouse-ear cress).